The primary structure comprises 111 residues: Denmotoxin (111 aa).

Positions 1 to 19 (MKTLLLAVAVVAFVCLGSA) are cleaved as a signal peptide. Positions 20–34 (DQLGLGRQQIDWGQG) are excised as a propeptide. Gln35 is modified (pyrrolidone carboxylic acid). Disulfide bonds link Cys44/Cys68, Cys47/Cys55, Cys61/Cys87, Cys91/Cys102, and Cys103/Cys108.

As to quaternary structure, monomer. In terms of tissue distribution, expressed by the venom gland.

It is found in the secreted. This bird-specific postsynaptic neurotoxin irreversibly binds and inhibits the chick muscle alpha-1-beta-1-gamma-delta (CHRNA1-CHRNB1-CHRNG-CHNRD) nicotinic acetylcholine receptor (nAChR) 100-fold more compared with the mouse receptor. The weak binding to mouse receptor is reversible. The polypeptide is Denmotoxin (Boiga dendrophila (Mangrove snake)).